A 178-amino-acid polypeptide reads, in one-letter code: Large ribosomal subunit protein uL6 (178 aa).

It belongs to the universal ribosomal protein uL6 family. As to quaternary structure, part of the 50S ribosomal subunit.

In terms of biological role, this protein binds to the 23S rRNA, and is important in its secondary structure. It is located near the subunit interface in the base of the L7/L12 stalk, and near the tRNA binding site of the peptidyltransferase center. The chain is Large ribosomal subunit protein uL6 from Streptococcus pneumoniae (strain JJA).